Consider the following 317-residue polypeptide: Enoyl-CoA delta isomerase 3, peroxisomal (317 aa).

In terms of domain architecture, ACB spans 1–46 (MPKPGVFNFVNKATWDARNALGSLPKETARKNYVDLVSSLSSSSEA). A disordered region spans residues 40 to 60 (LSSSSEAPSQGKRGADEKARE). Residue 120–124 (SGNDL) coordinates substrate. Residues 315–317 (AKL) carry the Microbody targeting signal motif.

The protein belongs to the enoyl-CoA hydratase/isomerase family. As to expression, expressed at high levels in the kidney. Also detected at very low levels in the duodenum, jejunum, ileum, heart, liver, lung, and brown adipose tissue (at protein level). In the kidney, expression seems to be localized mainly to the proximal tubule.

Its subcellular location is the peroxisome. The catalysed reaction is a (3Z)-enoyl-CoA = a 4-saturated (2E)-enoyl-CoA. It catalyses the reaction a (3E)-enoyl-CoA = a 4-saturated (2E)-enoyl-CoA. The enzyme catalyses (3E)-nonenoyl-CoA = (2E)-nonenoyl-CoA. Catalyzes the isomerization of trans-3-nonenoyl-CoA into trans-2-nonenoyl-CoA. May also have activity towards other enoyl-CoA species. The sequence is that of Enoyl-CoA delta isomerase 3, peroxisomal from Mus musculus (Mouse).